Reading from the N-terminus, the 712-residue chain is Probable GTP diphosphokinase RSH3, chloroplastic (712 aa).

Residues 1-64 (MVVATTIALY…LLFSGASVKS (64 aa)) constitute a chloroplast transit peptide. Low complexity predominate over residues 65–74 (SSSSSSSHPS). Residues 65–84 (SSSSSSSHPSVGEELASIRH) form a disordered region. In terms of domain architecture, HD spans 237–338 (YLQHCVETAM…IKLADRLHNM (102 aa)).

It belongs to the RelA/SpoT family.

The protein resides in the plastid. Its subcellular location is the chloroplast. It catalyses the reaction GTP + ATP = guanosine 3'-diphosphate 5'-triphosphate + AMP. Functionally, probable ppGpp (guanosine 3'-diphosphate 5'-diphosphate) synthetase that may be involved in a rapid plant ppGpp-mediated response to pathogens and other stresses. In Arabidopsis thaliana (Mouse-ear cress), this protein is Probable GTP diphosphokinase RSH3, chloroplastic (RSH3).